The following is a 125-amino-acid chain: Large ribosomal subunit protein bL12 (125 aa).

It belongs to the bacterial ribosomal protein bL12 family. Homodimer. Part of the ribosomal stalk of the 50S ribosomal subunit. Forms a multimeric L10(L12)X complex, where L10 forms an elongated spine to which 2 to 4 L12 dimers bind in a sequential fashion. Binds GTP-bound translation factors.

Functionally, forms part of the ribosomal stalk which helps the ribosome interact with GTP-bound translation factors. Is thus essential for accurate translation. This Bradyrhizobium sp. (strain ORS 278) protein is Large ribosomal subunit protein bL12.